Here is a 310-residue protein sequence, read N- to C-terminus: Porphobilinogen deaminase (310 aa).

Position 242 is an S-(dipyrrolylmethanemethyl)cysteine (Cys242).

This sequence belongs to the HMBS family. Monomer. Dipyrromethane serves as cofactor.

The enzyme catalyses 4 porphobilinogen + H2O = hydroxymethylbilane + 4 NH4(+). It functions in the pathway porphyrin-containing compound metabolism; protoporphyrin-IX biosynthesis; coproporphyrinogen-III from 5-aminolevulinate: step 2/4. Tetrapolymerization of the monopyrrole PBG into the hydroxymethylbilane pre-uroporphyrinogen in several discrete steps. In Shewanella baltica (strain OS223), this protein is Porphobilinogen deaminase.